The following is a 306-amino-acid chain: D-alanine--D-alanine ligase B (306 aa).

The 203-residue stretch at 101–303 folds into the ATP-grasp domain; the sequence is KLLWQGAGLP…FSQLVVRILE (203 aa). ATP is bound at residue 134 to 189; the sequence is ISALGLPVIVKPSREGSSVGMSKVVAENALQDALRLAFQHDEEVLIEKWLSGPEFT. Mg(2+)-binding residues include aspartate 257, glutamate 270, and asparagine 272.

The protein belongs to the D-alanine--D-alanine ligase family. Mg(2+) is required as a cofactor. The cofactor is Mn(2+).

The protein resides in the cytoplasm. It carries out the reaction 2 D-alanine + ATP = D-alanyl-D-alanine + ADP + phosphate + H(+). It functions in the pathway cell wall biogenesis; peptidoglycan biosynthesis. Its function is as follows. Cell wall formation. The chain is D-alanine--D-alanine ligase B from Shigella flexneri.